The sequence spans 300 residues: Porphobilinogen deaminase (300 aa).

Cys242 bears the S-(dipyrrolylmethanemethyl)cysteine mark.

This sequence belongs to the HMBS family. Monomer. It depends on dipyrromethane as a cofactor.

It carries out the reaction 4 porphobilinogen + H2O = hydroxymethylbilane + 4 NH4(+). It participates in porphyrin-containing compound metabolism; protoporphyrin-IX biosynthesis; coproporphyrinogen-III from 5-aminolevulinate: step 2/4. In terms of biological role, tetrapolymerization of the monopyrrole PBG into the hydroxymethylbilane pre-uroporphyrinogen in several discrete steps. This Rickettsia bellii (strain OSU 85-389) protein is Porphobilinogen deaminase.